We begin with the raw amino-acid sequence, 81 residues long: Photosystem I iron-sulfur center (81 aa).

4Fe-4S ferredoxin-type domains follow at residues 2-31 and 39-68; these read SHKIKIYDTCIGCTQCVRACPTDVLEMIPW and IASAPRTEDCVGCKRCESACPTDFLSVRVY. Residues Cys11, Cys14, Cys17, Cys21, Cys48, Cys51, Cys54, and Cys58 each contribute to the [4Fe-4S] cluster site.

The eukaryotic PSI reaction center is composed of at least 11 subunits. The cofactor is [4Fe-4S] cluster.

Its subcellular location is the plastid. It is found in the chloroplast thylakoid membrane. It catalyses the reaction reduced [plastocyanin] + hnu + oxidized [2Fe-2S]-[ferredoxin] = oxidized [plastocyanin] + reduced [2Fe-2S]-[ferredoxin]. In terms of biological role, apoprotein for the two 4Fe-4S centers FA and FB of photosystem I (PSI); essential for photochemical activity. FB is the terminal electron acceptor of PSI, donating electrons to ferredoxin. The C-terminus interacts with PsaA/B/D and helps assemble the protein into the PSI complex. Required for binding of PsaD and PsaE to PSI. PSI is a plastocyanin-ferredoxin oxidoreductase, converting photonic excitation into a charge separation, which transfers an electron from the donor P700 chlorophyll pair to the spectroscopically characterized acceptors A0, A1, FX, FA and FB in turn. The polypeptide is Photosystem I iron-sulfur center (Chara vulgaris (Common stonewort)).